A 270-amino-acid polypeptide reads, in one-letter code: Putative pyruvate, phosphate dikinase regulatory protein (270 aa).

149-156 (GVSRTSKT) serves as a coordination point for ADP.

It belongs to the pyruvate, phosphate/water dikinase regulatory protein family. PDRP subfamily.

The catalysed reaction is N(tele)-phospho-L-histidyl/L-threonyl-[pyruvate, phosphate dikinase] + ADP = N(tele)-phospho-L-histidyl/O-phospho-L-threonyl-[pyruvate, phosphate dikinase] + AMP + H(+). It catalyses the reaction N(tele)-phospho-L-histidyl/O-phospho-L-threonyl-[pyruvate, phosphate dikinase] + phosphate + H(+) = N(tele)-phospho-L-histidyl/L-threonyl-[pyruvate, phosphate dikinase] + diphosphate. Functionally, bifunctional serine/threonine kinase and phosphorylase involved in the regulation of the pyruvate, phosphate dikinase (PPDK) by catalyzing its phosphorylation/dephosphorylation. This is Putative pyruvate, phosphate dikinase regulatory protein from Sphingopyxis alaskensis (strain DSM 13593 / LMG 18877 / RB2256) (Sphingomonas alaskensis).